A 551-amino-acid polypeptide reads, in one-letter code: MHHLHPMIVCIFVMYTGIVGSDAIAGDQLLNIGVIQSKIRSLMYYTDGGASFIVVKLLPNLPPSNGTCNITSLDAYNVTLFKLLTPLIENLSKISTVTDTKTRQKRFAGVVVGLAALGVATAAQITAAVAIVKANANAAAINNLASSIQSTNKAVSDVIDASRTIATAVQAIQDHINGAIVNGITSASCRAHDALIGSILNLYLTELTTIFHNQITNPALTPLSIQALRILLGSTLPIVIESKLNTNLNTAELLSSGLLTGQIISISPMYMQMLIQINVPTFIMQPGAKVIDLIAISANHKLQEVVVQVPNRILEYANELQNYPANDCVVTPNSVFCRYNEGSPIPESQYQCLRGNLNSCTFTPIIGNFLKRFAFANGVLYANCKSLLCRCADPPHVVSQDDTQGISIIDIKRCSEMMLDTFSFRITSTFNATYVTDFSMINANIVHLSPLDLSNQINSINKSLKSAEDWIADSNFFANQARTAKTLYSLSAIALILSVITLVVVGLLIAYIIKLVSQIHQFRSLAATTMFHRENPAFFSKNNHGNIYGIS.

A signal peptide spans 1 to 23 (MHHLHPMIVCIFVMYTGIVGSDA). Residues 24 to 492 (IAGDQLLNIG…TAKTLYSLSA (469 aa)) are Extracellular-facing. N-linked (GlcNAc...) asparagine; by host glycosylation is found at asparagine 65, asparagine 69, asparagine 77, and asparagine 90. 5 disulfide bridges follow: cysteine 68–cysteine 189, cysteine 328–cysteine 337, cysteine 352–cysteine 360, cysteine 384–cysteine 389, and cysteine 391–cysteine 414. Residues 107–131 (FAGVVVGLAALGVATAAQITAAVAI) form a fusion peptide region. Residues 132–160 (VKANANAAAINNLASSIQSTNKAVSDVID) adopt a coiled-coil conformation. 2 N-linked (GlcNAc...) asparagine; by host glycosylation sites follow: asparagine 431 and asparagine 461. Residues 456–481 (QINSINKSLKSAEDWIADSNFFANQA) adopt a coiled-coil conformation. A helical membrane pass occupies residues 493–513 (IALILSVITLVVVGLLIAYII). At 514–551 (KLVSQIHQFRSLAATTMFHRENPAFFSKNNHGNIYGIS) the chain is on the cytoplasmic side.

Belongs to the paramyxoviruses fusion glycoprotein family. As to quaternary structure, homotrimer of disulfide-linked F1-F2. The inactive precursor F0 is glycosylated and proteolytically cleaved into F1 and F2 to be functionally active. The cleavage is mediated by cellular proteases during the transport and maturation of the polypeptide.

Its subcellular location is the virion membrane. It is found in the host cell membrane. Functionally, class I viral fusion protein. Under the current model, the protein has at least 3 conformational states: pre-fusion native state, pre-hairpin intermediate state, and post-fusion hairpin state. During viral and plasma cell membrane fusion, the heptad repeat (HR) regions assume a trimer-of-hairpins structure, positioning the fusion peptide in close proximity to the C-terminal region of the ectodomain. The formation of this structure appears to drive apposition and subsequent fusion of viral and plasma cell membranes. Directs fusion of viral and cellular membranes leading to delivery of the nucleocapsid into the cytoplasm. This fusion is pH independent and occurs directly at the outer cell membrane. The trimer of F1-F2 (F protein) probably interacts with HN at the virion surface. Upon HN binding to its cellular receptor, the hydrophobic fusion peptide is unmasked and interacts with the cellular membrane, inducing the fusion between cell and virion membranes. Later in infection, F proteins expressed at the plasma membrane of infected cells could mediate fusion with adjacent cells to form syncytia, a cytopathic effect that could lead to tissue necrosis. This chain is Fusion glycoprotein F0 (F), found in Human parainfluenza 2 virus (HPIV-2).